The chain runs to 66 residues: Photosystem II reaction center protein H (66 aa).

A helical transmembrane segment spans residues 29-49; it reads PIMGLTMVLFLVFLLIILQIY.

The protein belongs to the PsbH family. PSII is composed of 1 copy each of membrane proteins PsbA, PsbB, PsbC, PsbD, PsbE, PsbF, PsbH, PsbI, PsbJ, PsbK, PsbL, PsbM, PsbT, PsbX, PsbY, PsbZ, Psb30/Ycf12, at least 3 peripheral proteins of the oxygen-evolving complex and a large number of cofactors. It forms dimeric complexes.

It is found in the plastid. Its subcellular location is the chloroplast thylakoid membrane. In terms of biological role, one of the components of the core complex of photosystem II (PSII), required for its stability and/or assembly. PSII is a light-driven water:plastoquinone oxidoreductase that uses light energy to abstract electrons from H(2)O, generating O(2) and a proton gradient subsequently used for ATP formation. It consists of a core antenna complex that captures photons, and an electron transfer chain that converts photonic excitation into a charge separation. The chain is Photosystem II reaction center protein H from Thalassiosira pseudonana (Marine diatom).